A 278-amino-acid chain; its full sequence is Tryptophan synthase alpha chain (278 aa).

Residues Glu49 and Asp60 each act as proton acceptor in the active site.

Belongs to the TrpA family. Tetramer of two alpha and two beta chains.

The catalysed reaction is (1S,2R)-1-C-(indol-3-yl)glycerol 3-phosphate + L-serine = D-glyceraldehyde 3-phosphate + L-tryptophan + H2O. It participates in amino-acid biosynthesis; L-tryptophan biosynthesis; L-tryptophan from chorismate: step 5/5. Its function is as follows. The alpha subunit is responsible for the aldol cleavage of indoleglycerol phosphate to indole and glyceraldehyde 3-phosphate. The polypeptide is Tryptophan synthase alpha chain (Corynebacterium diphtheriae (strain ATCC 700971 / NCTC 13129 / Biotype gravis)).